The sequence spans 818 residues: Glycogen phosphorylase (818 aa).

At Lys667 the chain carries N6-(pyridoxal phosphate)lysine.

The protein belongs to the glycogen phosphorylase family. Pyridoxal 5'-phosphate is required as a cofactor.

The enzyme catalyses [(1-&gt;4)-alpha-D-glucosyl](n) + phosphate = [(1-&gt;4)-alpha-D-glucosyl](n-1) + alpha-D-glucose 1-phosphate. Functionally, phosphorylase is an important allosteric enzyme in carbohydrate metabolism. Enzymes from different sources differ in their regulatory mechanisms and in their natural substrates. However, all known phosphorylases share catalytic and structural properties. In Pasteurella multocida (strain Pm70), this protein is Glycogen phosphorylase (glgP).